Here is a 66-residue protein sequence, read N- to C-terminus: UPF0370 protein YpfN (66 aa).

A helical membrane pass occupies residues 4-24; it reads LAKYWWILVLVFLVGVLLNVI. The interval 39–66 is disordered; that stretch reads KPELPPHRDFNDKWDDEEDWPKKDQPKK. Residues 42 to 51 show a composition bias toward basic and acidic residues; sequence LPPHRDFNDK.

Belongs to the UPF0370 family.

It localises to the cell membrane. This Salmonella paratyphi A (strain AKU_12601) protein is UPF0370 protein YpfN.